A 391-amino-acid polypeptide reads, in one-letter code: S-adenosylmethionine synthase (391 aa).

ATP is bound at residue His-14. Asp-16 serves as a coordination point for Mg(2+). A K(+)-binding site is contributed by Glu-42. Glu-55 and Gln-98 together coordinate L-methionine. The flexible loop stretch occupies residues Gln-98 to Glu-108. Residues Asp-172–Lys-174, Arg-238–Phe-239, Asp-247, Arg-253–Lys-254, Ala-270, and Lys-274 contribute to the ATP site. Asp-247 serves as a coordination point for L-methionine. Lys-278 provides a ligand contact to L-methionine.

It belongs to the AdoMet synthase family. In terms of assembly, homotetramer; dimer of dimers. Mg(2+) serves as cofactor. Requires K(+) as cofactor.

Its subcellular location is the cytoplasm. The catalysed reaction is L-methionine + ATP + H2O = S-adenosyl-L-methionine + phosphate + diphosphate. It functions in the pathway amino-acid biosynthesis; S-adenosyl-L-methionine biosynthesis; S-adenosyl-L-methionine from L-methionine: step 1/1. In terms of biological role, catalyzes the formation of S-adenosylmethionine (AdoMet) from methionine and ATP. The overall synthetic reaction is composed of two sequential steps, AdoMet formation and the subsequent tripolyphosphate hydrolysis which occurs prior to release of AdoMet from the enzyme. The protein is S-adenosylmethionine synthase of Clostridium botulinum (strain Hall / ATCC 3502 / NCTC 13319 / Type A).